Consider the following 178-residue polypeptide: Cytidylate kinase (178 aa).

7-15 lines the ATP pocket; that stretch reads GLPGTGTTT.

This sequence belongs to the cytidylate kinase family. Type 2 subfamily.

It is found in the cytoplasm. It catalyses the reaction CMP + ATP = CDP + ADP. The catalysed reaction is dCMP + ATP = dCDP + ADP. This is Cytidylate kinase from Methanococcus maripaludis (strain DSM 14266 / JCM 13030 / NBRC 101832 / S2 / LL).